The sequence spans 89 residues: UPF0145 protein MJ1170 (89 aa).

It belongs to the UPF0145 family. Highly divergent.

The protein is UPF0145 protein MJ1170 of Methanocaldococcus jannaschii (strain ATCC 43067 / DSM 2661 / JAL-1 / JCM 10045 / NBRC 100440) (Methanococcus jannaschii).